An 87-amino-acid chain; its full sequence is MSILSALTSISNPMKSTKSSVANGGGRLSMGSNSVACGSCGGGNSSSGTINNADGSQTTYYSYTSPVYTYNYSYSYSSSGSSSCGCH.

Residues 1-22 (MSILSALTSISNPMKSTKSSVA) are compositionally biased toward polar residues. The tract at residues 1–24 (MSILSALTSISNPMKSTKSSVANG) is disordered.

This sequence belongs to the hssA/B family.

This is HssA/B-like protein 8 (hssl8) from Dictyostelium discoideum (Social amoeba).